We begin with the raw amino-acid sequence, 317 residues long: Aspartate carbamoyltransferase catalytic subunit (317 aa).

Residues Arg65 and Thr66 each coordinate carbamoyl phosphate. Position 93 (Lys93) interacts with L-aspartate. Residues Arg115, His145, and Gln148 each contribute to the carbamoyl phosphate site. Positions 178 and 233 each coordinate L-aspartate. The carbamoyl phosphate site is built by Gly274 and Pro275.

Belongs to the aspartate/ornithine carbamoyltransferase superfamily. ATCase family. In terms of assembly, heterododecamer (2C3:3R2) of six catalytic PyrB chains organized as two trimers (C3), and six regulatory PyrI chains organized as three dimers (R2).

The enzyme catalyses carbamoyl phosphate + L-aspartate = N-carbamoyl-L-aspartate + phosphate + H(+). It functions in the pathway pyrimidine metabolism; UMP biosynthesis via de novo pathway; (S)-dihydroorotate from bicarbonate: step 2/3. Functionally, catalyzes the condensation of carbamoyl phosphate and aspartate to form carbamoyl aspartate and inorganic phosphate, the committed step in the de novo pyrimidine nucleotide biosynthesis pathway. This Bordetella bronchiseptica (strain ATCC BAA-588 / NCTC 13252 / RB50) (Alcaligenes bronchisepticus) protein is Aspartate carbamoyltransferase catalytic subunit.